A 109-amino-acid chain; its full sequence is MEMDLNNRLTEDETLEQAYDIFLELAADNLDPADIILFNLQFEERGGAELFDPSEEWQEHVDFDLNPDFFAEVVIGLADTEDGEINNIFARVLLCREKNHKLCHILWRE.

Belongs to the putative dsDNA mimic protein family.

May act as a double-stranded DNA (dsDNA) mimic. Probably regulates the activity of a dsDNA-binding protein. The protein is Putative double-stranded DNA mimic protein YciU of Salmonella arizonae (strain ATCC BAA-731 / CDC346-86 / RSK2980).